Here is a 410-residue protein sequence, read N- to C-terminus: Elongation factor Tu, chloroplastic (410 aa).

The tr-type G domain occupies 10 to 213 (KPHLNIGTIG…TVDEYIPTPK (204 aa)). The tract at residues 19–26 (GHVDHGKT) is G1. GTP is bound at residue 19-26 (GHVDHGKT). Threonine 26 contacts Mg(2+). Residues 60–64 (GITIN) are G2. The interval 81–84 (DCPG) is G3. Residues 81-85 (DCPGH) and 136-139 (NKAD) each bind GTP. Residues 136–139 (NKAD) form a G4 region. The segment at 174–176 (SAI) is G5.

Belongs to the TRAFAC class translation factor GTPase superfamily. Classic translation factor GTPase family. EF-Tu/EF-1A subfamily.

The protein resides in the plastid. The protein localises to the chloroplast. It carries out the reaction GTP + H2O = GDP + phosphate + H(+). Functionally, GTP hydrolase that promotes the GTP-dependent binding of aminoacyl-tRNA to the A-site of ribosomes during protein biosynthesis. The protein is Elongation factor Tu, chloroplastic (tufA) of Codium fragile (Dead man's fingers).